We begin with the raw amino-acid sequence, 482 residues long: 7-deoxyloganetic acid glucosyltransferase (482 aa).

Histidine 22 acts as the Proton acceptor in catalysis. An an anthocyanidin-binding site is contributed by histidine 22. The Charge relay role is filled by aspartate 127. UDP-alpha-D-glucose is bound by residues threonine 149, alanine 362, glutamine 364, histidine 379, tryptophan 382, asparagine 383, serine 384, and glutamate 387. An an anthocyanidin-binding site is contributed by alanine 402. Aspartate 403 and glutamine 404 together coordinate UDP-alpha-D-glucose.

Belongs to the UDP-glycosyltransferase family. In terms of tissue distribution, expressed in leaves, roots and stems. Lower levels of expression in flowers. Preferentially expressed in internal phloem parenchyma cells.

It catalyses the reaction 7-deoxyloganetate + UDP-alpha-D-glucose = 7-deoxyloganate + UDP + H(+). Functionally, iridoid glucosyltransferase acting exclusively on 7-deoxyloganetic acid. No activity with 7-deoxyloganetin. Catalyzes the fourth to last step in secologanin biosynthesis. The sequence is that of 7-deoxyloganetic acid glucosyltransferase (UGT709C2) from Catharanthus roseus (Madagascar periwinkle).